We begin with the raw amino-acid sequence, 120 residues long: Ribosome-binding factor A (120 aa).

The protein belongs to the RbfA family. In terms of assembly, monomer. Binds 30S ribosomal subunits, but not 50S ribosomal subunits or 70S ribosomes.

The protein resides in the cytoplasm. Its function is as follows. One of several proteins that assist in the late maturation steps of the functional core of the 30S ribosomal subunit. Associates with free 30S ribosomal subunits (but not with 30S subunits that are part of 70S ribosomes or polysomes). Required for efficient processing of 16S rRNA. May interact with the 5'-terminal helix region of 16S rRNA. The chain is Ribosome-binding factor A from Buchnera aphidicola subsp. Acyrthosiphon pisum (strain 5A).